A 322-amino-acid polypeptide reads, in one-letter code: Extracellular metalloprotease AFUA_1G07730 (322 aa).

An N-terminal signal peptide occupies residues 1–22; the sequence is MLPFNSCVYVLLIISLMSNCRA. Residues Asn123 and Asn197 are each glycosylated (N-linked (GlcNAc...) asparagine). Residue His233 coordinates Zn(2+). Glu234 is a catalytic residue. Residue His237 coordinates Zn(2+). Cys272 and Cys299 form a disulfide bridge.

It belongs to the peptidase M43B family.

The protein resides in the secreted. Its function is as follows. Secreted metalloproteinase that allows assimilation of proteinaceous substrates. Plays a pivotal role as a pathogenicity determinant during infections and contributes to the ability of the pathogen to persist within the mammalian host. The sequence is that of Extracellular metalloprotease AFUA_1G07730 from Aspergillus fumigatus (strain ATCC MYA-4609 / CBS 101355 / FGSC A1100 / Af293) (Neosartorya fumigata).